The following is a 423-amino-acid chain: Dihydroorotase (423 aa).

Zn(2+) is bound by residues histidine 60 and histidine 62. Substrate-binding positions include 62–64 (HFR) and asparagine 94. Zn(2+)-binding residues include aspartate 152, histidine 179, histidine 232, and aspartate 305. The active site involves aspartate 305. Residues histidine 309 and 323–324 (PG) contribute to the substrate site.

The protein belongs to the metallo-dependent hydrolases superfamily. DHOase family. Class I DHOase subfamily. It depends on Zn(2+) as a cofactor.

The enzyme catalyses (S)-dihydroorotate + H2O = N-carbamoyl-L-aspartate + H(+). It participates in pyrimidine metabolism; UMP biosynthesis via de novo pathway; (S)-dihydroorotate from bicarbonate: step 3/3. Its function is as follows. Catalyzes the reversible cyclization of carbamoyl aspartate to dihydroorotate. The polypeptide is Dihydroorotase (Sulfurihydrogenibium sp. (strain YO3AOP1)).